Reading from the N-terminus, the 388-residue chain is Ferrochelatase (388 aa).

Residues H196 and E277 each contribute to the Fe cation site.

It belongs to the ferrochelatase family.

It localises to the cytoplasm. The enzyme catalyses heme b + 2 H(+) = protoporphyrin IX + Fe(2+). It participates in porphyrin-containing compound metabolism; protoheme biosynthesis; protoheme from protoporphyrin-IX: step 1/1. Its function is as follows. Catalyzes the ferrous insertion into protoporphyrin IX. In Trichormus variabilis (strain ATCC 29413 / PCC 7937) (Anabaena variabilis), this protein is Ferrochelatase.